Here is a 418-residue protein sequence, read N- to C-terminus: Elongation factor 1-gamma 1 (418 aa).

A GST N-terminal domain is found at 1-82 (MALVLHTFDG…YVTRSKSDNP (82 aa)). The GST C-terminal domain maps to 87-213 (SLIEYAHIEQ…GDVKQADSVP (127 aa)). The tract at residues 211–265 (SVPQVQKKAAAPKEQKPKEAKKEAPKEAPKPKAAEKPEEEEEAPKPKPKNPLDLL) is disordered. The segment covering 221–246 (APKEQKPKEAKKEAPKEAPKPKAAEK) has biased composition (basic and acidic residues). Residues 258–418 (PKNPLDLLPP…EALLDAKCFK (161 aa)) enclose the EF-1-gamma C-terminal domain.

In terms of assembly, EF-1 is composed of four subunits: alpha, beta, delta, and gamma.

In terms of biological role, probably plays a role in anchoring the complex to other cellular components. The chain is Elongation factor 1-gamma 1 from Oryza sativa subsp. japonica (Rice).